Reading from the N-terminus, the 159-residue chain is Eukaryotic translation initiation factor 5A-3 (159 aa).

Residues 1–12 show a composition bias toward basic and acidic residues; it reads MSDEEHQFESKA. The segment at 1 to 21 is disordered; that stretch reads MSDEEHQFESKADAGASKTYP. Lysine 52 is subject to Hypusine.

Belongs to the eIF-5A family. In terms of processing, lys-52 undergoes hypusination, a unique post-translational modification that consists in the addition of a butylamino group from spermidine to lysine side chain, leading to the formation of the unusual amino acid hypusine. eIF-5As are the only known proteins to undergo this modification, which is essential for their function.

In terms of biological role, translation factor that promotes translation elongation and termination, particularly upon ribosome stalling at specific amino acid sequence contexts. Binds between the exit (E) and peptidyl (P) site of the ribosome and promotes rescue of stalled ribosome: specifically required for efficient translation of polyproline-containing peptides as well as other motifs that stall the ribosome. Acts as a ribosome quality control (RQC) cofactor by joining the RQC complex to facilitate peptidyl transfer during CAT tailing step. The chain is Eukaryotic translation initiation factor 5A-3 from Solanum lycopersicum (Tomato).